A 794-amino-acid polypeptide reads, in one-letter code: Transcription factor TOG1 (794 aa).

Zn(2+) is bound by residues C18, C21, C28, C34, C37, and C44. A DNA-binding region (zn(2)-C6 fungal-type) is located at residues 18 to 44; that stretch reads CDRCHRKKIKCNSKKPCFGCIGSQSKC.

Its subcellular location is the nucleus. Functionally, transcriptional activator required for growth on non-fermentable carbon sources and that regulates genes involved in fatty acid utilization. Acts as a direct activator that binds the promoters of oleate utilizing genes, encoded key enzymes in beta-oxidation and NADPH regeneration (POX1, FOX2,POT1 and IDP2), the glyoxylate shunt (MLS1 and ICL1), and gluconeogenesis (PCK1 and FBP1). Also regulates the abundance of peroxisomes that are vital for fatty acid oxidation. The protein is Transcription factor TOG1 of Saccharomyces cerevisiae (strain ATCC 204508 / S288c) (Baker's yeast).